Consider the following 216-residue polypeptide: Imidazoleglycerol-phosphate dehydratase (216 aa).

Ser211 bears the Phosphoserine mark.

It belongs to the imidazoleglycerol-phosphate dehydratase family.

It carries out the reaction D-erythro-1-(imidazol-4-yl)glycerol 3-phosphate = 3-(imidazol-4-yl)-2-oxopropyl phosphate + H2O. It functions in the pathway amino-acid biosynthesis; L-histidine biosynthesis; L-histidine from 5-phospho-alpha-D-ribose 1-diphosphate: step 6/9. The polypeptide is Imidazoleglycerol-phosphate dehydratase (his5) (Schizosaccharomyces pombe (strain 972 / ATCC 24843) (Fission yeast)).